The chain runs to 1124 residues: Tyrosine-protein kinase JAK3 (1124 aa).

The interaction with cytokine/interferon/growth hormone receptors stretch occupies residues 1 to 223; that stretch reads MAPPSEETPL…RRTVRRALRR (223 aa). Ser-17 carries the post-translational modification Phosphoserine. The FERM domain maps to 24 to 356; it reads GALHVLLPAR…GYFRLTTDSQ (333 aa). The 101-residue stretch at 375 to 475 folds into the SH2; atypical domain; sequence QCHGPITLDF…GVAVTLTSCC (101 aa). Positions 521 to 781 constitute a Protein kinase 1 domain; the sequence is LEWHENLGHG…AVIRDLNSLI (261 aa). Tyr-785 carries the phosphotyrosine; by autocatalysis modification. Residues 822–1111 form the Protein kinase 2 domain; sequence LKYISQLGKG…SRGCETHAFT (290 aa). ATP contacts are provided by residues 828–836 and Lys-855; that span reads LGKGNFGSV. Residues Tyr-904 and Tyr-939 each carry the phosphotyrosine modification. Asp-949 (proton acceptor) is an active-site residue. Phosphotyrosine; by autocatalysis occurs at positions 980 and 981.

The protein belongs to the protein kinase superfamily. Tyr protein kinase family. JAK subfamily. Interacts with STAM2 and MYO18A. Interacts with SHB. Interacts with CD69. Post-translationally, tyrosine phosphorylated in response to IL-2 and IL-4. Dephosphorylation of Tyr-980 and Tyr-981 by PTPN2 negatively regulates cytokine-mediated signaling. In terms of tissue distribution, in NK cells and an NK-like cell line but not in resting T-cells or in other tissues. The S-form is more commonly seen in hematopoietic lines, whereas the B-form is detected in cells both of hematopoietic and epithelial origins.

It is found in the endomembrane system. It localises to the cytoplasm. It carries out the reaction L-tyrosyl-[protein] + ATP = O-phospho-L-tyrosyl-[protein] + ADP + H(+). Non-receptor tyrosine kinase involved in various processes such as cell growth, development, or differentiation. Mediates essential signaling events in both innate and adaptive immunity and plays a crucial role in hematopoiesis during T-cells development. In the cytoplasm, plays a pivotal role in signal transduction via its association with type I receptors sharing the common subunit gamma such as IL2R, IL4R, IL7R, IL9R, IL15R and IL21R. Following ligand binding to cell surface receptors, phosphorylates specific tyrosine residues on the cytoplasmic tails of the receptor, creating docking sites for STATs proteins. Subsequently, phosphorylates the STATs proteins once they are recruited to the receptor. Phosphorylated STATs then form homodimer or heterodimers and translocate to the nucleus to activate gene transcription. For example, upon IL2R activation by IL2, JAK1 and JAK3 molecules bind to IL2R beta (IL2RB) and gamma chain (IL2RG) subunits inducing the tyrosine phosphorylation of both receptor subunits on their cytoplasmic domain. Then, STAT5A and STAT5B are recruited, phosphorylated and activated by JAK1 and JAK3. Once activated, dimerized STAT5 translocates to the nucleus and promotes the transcription of specific target genes in a cytokine-specific fashion. In Homo sapiens (Human), this protein is Tyrosine-protein kinase JAK3.